A 741-amino-acid chain; its full sequence is Cellulose 1,4-beta-cellobiosidase (reducing end) CelS (741 aa).

The N-terminal stretch at 1 to 27 (MVKSRKISILLAVAMLVSIMIPTTAFA) is a signal peptide. Residue glutamate 76 coordinates substrate. Glutamate 87 functions as the Proton donor in the catalytic mechanism. Residues threonine 140, asparagine 204, aspartate 241, glutamine 247, and 251–252 (TN) contribute to the substrate site. The Nucleophile role is filled by aspartate 255. Substrate is bound by residues 301–302 (KY), 326–327 (WY), tyrosine 421, aspartate 520, and 645–646 (WH). Residues 673–739 (STKLYGDVND…ILKEIDTLPY (67 aa)) enclose the Dockerin domain. 12 residues coordinate Ca(2+): aspartate 679, asparagine 681, aspartate 683, glycine 684, lysine 685, aspartate 690, aspartate 711, leucine 712, asparagine 713, aspartate 715, arginine 717, and aspartate 722.

It belongs to the glycosyl hydrolase 48 (cellulase L) family.

The protein localises to the secreted. The catalysed reaction is Hydrolysis of (1-&gt;4)-beta-D-glucosidic linkages in cellulose and similar substrates, releasing cellobiose from the reducing ends of the chains.. Its activity is regulated as follows. Inhibited by cellobiose and lactose, but not by glucose. Functionally, this enzyme catalyzes the exohydrolysis of 1,4-beta-glucosidic linkages in cellulose with a preference for amorphous or crystalline cellulose over carboxymethyl cellulose. This chain is Cellulose 1,4-beta-cellobiosidase (reducing end) CelS (celS), found in Acetivibrio thermocellus (strain ATCC 27405 / DSM 1237 / JCM 9322 / NBRC 103400 / NCIMB 10682 / NRRL B-4536 / VPI 7372) (Clostridium thermocellum).